A 222-amino-acid chain; its full sequence is Peptide methionine sulfoxide reductase MsrA (222 aa).

C60 is a catalytic residue.

Belongs to the MsrA Met sulfoxide reductase family.

It catalyses the reaction L-methionyl-[protein] + [thioredoxin]-disulfide + H2O = L-methionyl-(S)-S-oxide-[protein] + [thioredoxin]-dithiol. It carries out the reaction [thioredoxin]-disulfide + L-methionine + H2O = L-methionine (S)-S-oxide + [thioredoxin]-dithiol. Functionally, has an important function as a repair enzyme for proteins that have been inactivated by oxidation. Catalyzes the reversible oxidation-reduction of methionine sulfoxide in proteins to methionine. The chain is Peptide methionine sulfoxide reductase MsrA from Pseudomonas putida (strain W619).